The primary structure comprises 390 residues: Dual-specificity RNA methyltransferase RlmN (390 aa).

E110 serves as the catalytic Proton acceptor. The Radical SAM core domain maps to 116–355 (EADRATLCVS…VIIRKTRGDD (240 aa)). Residues C123 and C360 are joined by a disulfide bond. The [4Fe-4S] cluster site is built by C130, C134, and C137. Residues 184–185 (GE), S216, 238–240 (SLH), and N317 contribute to the S-adenosyl-L-methionine site. C360 serves as the catalytic S-methylcysteine intermediate.

It belongs to the radical SAM superfamily. RlmN family. [4Fe-4S] cluster is required as a cofactor.

The protein resides in the cytoplasm. The catalysed reaction is adenosine(2503) in 23S rRNA + 2 reduced [2Fe-2S]-[ferredoxin] + 2 S-adenosyl-L-methionine = 2-methyladenosine(2503) in 23S rRNA + 5'-deoxyadenosine + L-methionine + 2 oxidized [2Fe-2S]-[ferredoxin] + S-adenosyl-L-homocysteine. It carries out the reaction adenosine(37) in tRNA + 2 reduced [2Fe-2S]-[ferredoxin] + 2 S-adenosyl-L-methionine = 2-methyladenosine(37) in tRNA + 5'-deoxyadenosine + L-methionine + 2 oxidized [2Fe-2S]-[ferredoxin] + S-adenosyl-L-homocysteine. In terms of biological role, specifically methylates position 2 of adenine 2503 in 23S rRNA and position 2 of adenine 37 in tRNAs. m2A2503 modification seems to play a crucial role in the proofreading step occurring at the peptidyl transferase center and thus would serve to optimize ribosomal fidelity. The protein is Dual-specificity RNA methyltransferase RlmN of Haemophilus influenzae (strain 86-028NP).